We begin with the raw amino-acid sequence, 381 residues long: 3-dehydroquinate synthase (381 aa).

Residues 81–86, 115–119, 139–140, K152, and K161 contribute to the NAD(+) site; these read EGEVSK, GVVGD, and TS. Zn(2+)-binding residues include E194, H256, and H274.

This sequence belongs to the sugar phosphate cyclases superfamily. Dehydroquinate synthase family. The cofactor is Co(2+). Requires Zn(2+) as cofactor. NAD(+) serves as cofactor.

The protein resides in the cytoplasm. The enzyme catalyses 7-phospho-2-dehydro-3-deoxy-D-arabino-heptonate = 3-dehydroquinate + phosphate. The protein operates within metabolic intermediate biosynthesis; chorismate biosynthesis; chorismate from D-erythrose 4-phosphate and phosphoenolpyruvate: step 2/7. Functionally, catalyzes the conversion of 3-deoxy-D-arabino-heptulosonate 7-phosphate (DAHP) to dehydroquinate (DHQ). This is 3-dehydroquinate synthase from Rhodopseudomonas palustris (strain BisA53).